We begin with the raw amino-acid sequence, 161 residues long: Cytochrome c-type biogenesis protein CcmE (161 aa).

At 1-8 (MNPRRKKR) the chain is on the cytoplasmic side. Residues 9-29 (LGLILALFVGISATVGLMLYA) traverse the membrane as a helical; Signal-anchor for type II membrane protein segment. Over 30-161 (LNQNMDLFYT…TEQQKQGTGQ (132 aa)) the chain is Periplasmic. Residues His129 and Tyr133 each coordinate heme. Residues 142-161 (MKKTHEPLQYTEQQKQGTGQ) are disordered. The span at 151–161 (YTEQQKQGTGQ) shows a compositional bias: polar residues.

Belongs to the CcmE/CycJ family.

The protein localises to the cell inner membrane. In terms of biological role, heme chaperone required for the biogenesis of c-type cytochromes. Transiently binds heme delivered by CcmC and transfers the heme to apo-cytochromes in a process facilitated by CcmF and CcmH. This Aliivibrio fischeri (strain ATCC 700601 / ES114) (Vibrio fischeri) protein is Cytochrome c-type biogenesis protein CcmE.